The following is a 1385-amino-acid chain: Contactin-associated protein 1 (1385 aa).

An N-terminal signal peptide occupies residues 1–20 (MMSLRLFSILLATVVSGAWG). Topologically, residues 21–1284 (WGYYGCNEEL…PYYHDDGWIA (1264 aa)) are extracellular. The F5/8 type C domain occupies 26 to 169 (CNEELVGPLY…IGLRLGIYGC (144 aa)). A disulfide bond links C26 and C169. N-linked (GlcNAc...) asparagine glycosylation is found at N121, N129, and N277. Laminin G-like domains follow at residues 204-356 (FKTE…AFRC) and 390-539 (FRTW…FDTC). C324 and C356 are joined by a disulfide. 3 N-linked (GlcNAc...) asparagine glycosylation sites follow: N421, N500, and N519. Intrachain disulfides connect C507/C539, C545/C556, C550/C565, and C567/C577. The EGF-like 1 domain maps to 545 to 577 (CSPNMCEHDGRCYQSWDDFICYCELTGYKGVTC). The Fibrinogen C-terminal domain maps to 577-796 (CHEPLYKESC…NTISFHTGAA (220 aa)). N-linked (GlcNAc...) asparagine glycosylation is found at N598, N654, N665, N764, N805, N844, N861, N949, and N957. The region spanning 814 to 958 (FRTSAPSGVF…NASEGTFPNC (145 aa)) is the Laminin G-like 3 domain. Disulfide bonds link C931–C958, C962–C975, C969–C984, and C986–C996. Positions 962-996 (CTHPRFPCFHGGRCVERYSYYTCDCDLTAFDGPYC) constitute an EGF-like 2 domain. 2 N-linked (GlcNAc...) asparagine glycosylation sites follow: N1079 and N1148. The Laminin G-like 4 domain occupies 1089 to 1251 (FSTNSAPAVL…VQGELSESNC (163 aa)). A disulfide bridge links C1210 with C1251. Residues 1285–1305 (ILLGFLVAFLLLGLVGMLVLF) form a helical membrane-spanning segment. The Cytoplasmic segment spans residues 1306 to 1385 (YLQNHRYKGS…PQILEESRSE (80 aa)). Positions 1317–1385 (HTNEPKATHD…PQILEESRSE (69 aa)) are disordered. Residues 1319 to 1329 (NEPKATHDSHP) are compositionally biased toward basic and acidic residues. Positions 1334-1367 (PLPPSGPAQAPAPTPAPTQLPTPAPAPAPAPASG) are enriched in pro residues. The SH3-binding signature appears at 1334-1370 (PLPPSGPAQAPAPTPAPTQLPTPAPAPAPAPASGPGP). Phosphoserine is present on S1384.

This sequence belongs to the neurexin family. Interacts with CNTN1/contactin in cis form. In terms of tissue distribution, expressed in brain. In myelinated nerve fibers predominantly found in paranodal axoglial junctions. In the internodal region of myelinated axons in the CNS and the PNS also found as a thin line apposing the inner mesaxon of the myelin sheath. In PNS neurons this line forms a circumferential ring that apposes the innermost aspect of Schmidt-Lanterman incisures.

The protein localises to the membrane. Its subcellular location is the cell junction. The protein resides in the paranodal septate junction. Functionally, required, with CNTNAP2, for radial and longitudinal organization of myelinated axons. Plays a role in the formation of functional distinct domains critical for saltatory conduction of nerve impulses in myelinated nerve fibers. Demarcates the paranodal region of the axo-glial junction. In association with contactin involved in the signaling between axons and myelinating glial cells. This Mus musculus (Mouse) protein is Contactin-associated protein 1 (Cntnap1).